The primary structure comprises 76 residues: Sec-independent protein translocase protein TatA (76 aa).

The helical transmembrane segment at Met1 to Gly21 threads the bilayer. Positions Asp45–Ala76 are disordered.

This sequence belongs to the TatA/E family. The Tat system comprises two distinct complexes: a TatABC complex, containing multiple copies of TatA, TatB and TatC subunits, and a separate TatA complex, containing only TatA subunits. Substrates initially bind to the TatABC complex, which probably triggers association of the separate TatA complex to form the active translocon.

It is found in the cell inner membrane. Functionally, part of the twin-arginine translocation (Tat) system that transports large folded proteins containing a characteristic twin-arginine motif in their signal peptide across membranes. TatA could form the protein-conducting channel of the Tat system. The polypeptide is Sec-independent protein translocase protein TatA (Pasteurella multocida (strain Pm70)).